The following is a 32-amino-acid chain: Ribulose bisphosphate carboxylase/oxygenase activase, chloroplastic (32 aa).

A disordered region spans residues 13 to 32 (FGALREGPPTFEQPAMTIEK).

Belongs to the RuBisCO activase family.

It localises to the plastid. The protein localises to the chloroplast stroma. Its function is as follows. Activation of RuBisCO (ribulose-1,5-bisphosphate carboxylase/oxygenase; EC 4.1.1.39) involves the ATP-dependent carboxylation of the epsilon-amino group of lysine leading to a carbamate structure. This Populus euphratica (Euphrates poplar) protein is Ribulose bisphosphate carboxylase/oxygenase activase, chloroplastic.